The sequence spans 434 residues: ATP-dependent RNA helicase RhlB (434 aa).

The Q motif motif lies at Gln-9–Ala-37. Residues Leu-40 to Val-219 form the Helicase ATP-binding domain. Residue Ala-53–Thr-60 participates in ATP binding. Positions Asp-165–Asp-168 match the DEAD box motif. In terms of domain architecture, Helicase C-terminal spans Ala-245–Leu-390. The tract at residues Pro-394 to Ala-434 is disordered. Positions Asn-406–Ser-418 are enriched in low complexity. Positions Gly-419–Pro-428 are enriched in basic residues.

It belongs to the DEAD box helicase family. RhlB subfamily. In terms of assembly, component of the RNA degradosome, which is a multiprotein complex involved in RNA processing and mRNA degradation.

It localises to the cytoplasm. It carries out the reaction ATP + H2O = ADP + phosphate + H(+). Its function is as follows. DEAD-box RNA helicase involved in RNA degradation. Has RNA-dependent ATPase activity and unwinds double-stranded RNA. The polypeptide is ATP-dependent RNA helicase RhlB (Aliivibrio salmonicida (strain LFI1238) (Vibrio salmonicida (strain LFI1238))).